A 158-amino-acid chain; its full sequence is MGRFLLVTLSMLVVTFSLNEANSCCCPQDWLPKNGFCYKVFNDLKNWNDAEMFCRKFKPGCHLASIHSNADSADLAEYISDYLKSDGHVWIGLNDPRKQRTWVWSDRSSTNYLAWNQGEPNNSKNIEYCVHLWALTGYLKWNDTPCEALYHFICQCKF.

The signal sequence occupies residues 1 to 20; sequence MGRFLLVTLSMLVVTFSLNE. 3 cysteine pairs are disulfide-bonded: Cys-26/Cys-37, Cys-54/Cys-154, and Cys-129/Cys-146. Residues 33–155 form the C-type lectin domain; the sequence is KNGFCYKVFN…CEALYHFICQ (123 aa). The Mannose-binding signature appears at 119–121; sequence EPN. A glycan (N-linked (GlcNAc...) asparagine) is linked at Asn-121. Positions 127, 142, and 143 each coordinate Ca(2+).

It belongs to the true venom lectin family. As to quaternary structure, homodimer; disulfide-linked. In terms of tissue distribution, expressed by the venom gland.

It is found in the secreted. Its function is as follows. Mannose-binding lectin that binds to and agglutinates erythrocytes in a calcium-dependent manner. The chain is C-type lectin mannose-binding isoform from Notechis scutatus scutatus (Mainland tiger snake).